We begin with the raw amino-acid sequence, 871 residues long: Protein translocase subunit SecA (871 aa).

Residues glutamine 80, glycine 98–threonine 102, and aspartate 537 each bind ATP.

Belongs to the SecA family. As to quaternary structure, monomer and homodimer. Part of the essential Sec protein translocation apparatus which comprises SecA, SecYEG and auxiliary proteins SecDF. Other proteins may also be involved. A single SecA monomer interacts with SecY in the channel.

It localises to the cell inner membrane. Its subcellular location is the cytoplasm. It carries out the reaction ATP + H2O + cellular proteinSide 1 = ADP + phosphate + cellular proteinSide 2.. Functionally, part of the Sec protein translocase complex. Interacts with the SecYEG preprotein conducting channel. Has a central role in coupling the hydrolysis of ATP to the transfer of proteins into and across the cell membrane, serving as an ATP-driven molecular motor driving the stepwise translocation of polypeptide chains across the membrane. In Thermotoga maritima (strain ATCC 43589 / DSM 3109 / JCM 10099 / NBRC 100826 / MSB8), this protein is Protein translocase subunit SecA.